We begin with the raw amino-acid sequence, 761 residues long: Semaphorin-3D (761 aa).

Residues 1–24 (MRASQVPNACSLLSLAMLFFPVTG) form the signal peptide. Residues 32–519 (RLKLSYKDLL…SRDGLVQLSL (488 aa)) form the Sema domain. A disulfide bond links Cys-105 and Cys-116. The N-linked (GlcNAc...) asparagine glycan is linked to Asn-127. Cystine bridges form between Cys-134/Cys-143, Cys-274/Cys-386, Cys-298/Cys-346, and Cys-522/Cys-540. Positions 552–670 (PTSKRRARRQ…IHTIVKLNLN (119 aa)) constitute an Ig-like C2-type domain. Asn-595 carries an N-linked (GlcNAc...) asparagine glycan. A disulfide bridge links Cys-653 with Cys-719. A compositionally biased stretch (basic residues) spans 728–754 (RRQRNKGGAKWKHVQEMKKKRNRRHHE). The tract at residues 728 to 761 (RRQRNKGGAKWKHVQEMKKKRNRRHHEPARPPST) is disordered.

This sequence belongs to the semaphorin family. In terms of tissue distribution, developing spinal cord and developing visual system. Collapsin-1, -2, -3, and -5 bind to overlapping but distinct axon tracts.

The protein localises to the secreted. Its function is as follows. Induces the collapse and paralysis of neuronal growth cones. Could potentially act as repulsive cues toward specific neuronal populations. Binds to neuropilin. The sequence is that of Semaphorin-3D (SEMA3D) from Gallus gallus (Chicken).